Reading from the N-terminus, the 376-residue chain is Anhydro-N-acetylmuramic acid kinase (376 aa).

16-23 serves as a coordination point for ATP; it reads GTSMDGVD.

Belongs to the anhydro-N-acetylmuramic acid kinase family.

It carries out the reaction 1,6-anhydro-N-acetyl-beta-muramate + ATP + H2O = N-acetyl-D-muramate 6-phosphate + ADP + H(+). It participates in amino-sugar metabolism; 1,6-anhydro-N-acetylmuramate degradation. The protein operates within cell wall biogenesis; peptidoglycan recycling. Catalyzes the specific phosphorylation of 1,6-anhydro-N-acetylmuramic acid (anhMurNAc) with the simultaneous cleavage of the 1,6-anhydro ring, generating MurNAc-6-P. Is required for the utilization of anhMurNAc either imported from the medium or derived from its own cell wall murein, and thus plays a role in cell wall recycling. This chain is Anhydro-N-acetylmuramic acid kinase, found in Paraburkholderia xenovorans (strain LB400).